Consider the following 609-residue polypeptide: N-acetyltransferase ESCO2 (609 aa).

4 disordered regions span residues 1–71 (MLSR…RVSP), 100–165 (EAKS…TDQV), 197–241 (KKPT…SPVR), and 314–357 (PDHD…LTAT). 2 stretches are compositionally biased toward polar residues: residues 13 to 22 (AESNPSKKQI) and 41 to 54 (ISLN…STPK). Over residues 126 to 135 (PAKKVQKKPR) the composition is skewed to basic residues. Over residues 214-230 (PTYEKPSIRKPVREKEL) the composition is skewed to basic and acidic residues. Over residues 345-355 (PLNSSTPSALT) the composition is skewed to polar residues. The CCHH-type zinc finger occupies 392-416 (TTCASCGMLYSTDSPEDNFQHTQFH).

It belongs to the acetyltransferase family. ECO subfamily.

It localises to the nucleus. The protein localises to the chromosome. The catalysed reaction is L-lysyl-[protein] + acetyl-CoA = N(6)-acetyl-L-lysyl-[protein] + CoA + H(+). Its function is as follows. Acetyltransferase required for the establishment of sister chromatid cohesion. Couples the processes of cohesion and DNA replication to ensure that only sister chromatids become paired together. Essential for early development. In Danio rerio (Zebrafish), this protein is N-acetyltransferase ESCO2 (esco2).